Consider the following 387-residue polypeptide: Putative ribosomal RNA large subunit methyltransferase MJ1649 (387 aa).

The PUA domain maps to Leu-5–Lys-81.

The protein belongs to the methyltransferase superfamily. RlmI family.

It is found in the cytoplasm. This chain is Putative ribosomal RNA large subunit methyltransferase MJ1649, found in Methanocaldococcus jannaschii (strain ATCC 43067 / DSM 2661 / JAL-1 / JCM 10045 / NBRC 100440) (Methanococcus jannaschii).